The following is a 214-amino-acid chain: Dephospho-CoA kinase (214 aa).

The region spanning 3-202 (KIGLTGGIGS…DRWLALAGAA (200 aa)) is the DPCK domain. ATP is bound at residue 11 to 16 (GSGKSR).

It belongs to the CoaE family.

Its subcellular location is the cytoplasm. It carries out the reaction 3'-dephospho-CoA + ATP = ADP + CoA + H(+). It participates in cofactor biosynthesis; coenzyme A biosynthesis; CoA from (R)-pantothenate: step 5/5. In terms of biological role, catalyzes the phosphorylation of the 3'-hydroxyl group of dephosphocoenzyme A to form coenzyme A. This chain is Dephospho-CoA kinase, found in Bordetella pertussis (strain Tohama I / ATCC BAA-589 / NCTC 13251).